The primary structure comprises 415 residues: Lipoyl synthase, mitochondrial (415 aa).

Residues 1–33 (MAASTSHLRSLCSSTRSLSRSGVIVTPIACRGY) constitute a mitochondrion transit peptide. The [4Fe-4S] cluster site is built by cysteine 132, cysteine 137, cysteine 143, cysteine 163, cysteine 167, cysteine 170, and serine 378. A Radical SAM core domain is found at 148–367 (DKSSATATIM…RQRALEMGFL (220 aa)).

The protein belongs to the radical SAM superfamily. Lipoyl synthase family. [4Fe-4S] cluster serves as cofactor.

The protein resides in the mitochondrion. The catalysed reaction is [[Fe-S] cluster scaffold protein carrying a second [4Fe-4S](2+) cluster] + N(6)-octanoyl-L-lysyl-[protein] + 2 oxidized [2Fe-2S]-[ferredoxin] + 2 S-adenosyl-L-methionine + 4 H(+) = [[Fe-S] cluster scaffold protein] + N(6)-[(R)-dihydrolipoyl]-L-lysyl-[protein] + 4 Fe(3+) + 2 hydrogen sulfide + 2 5'-deoxyadenosine + 2 L-methionine + 2 reduced [2Fe-2S]-[ferredoxin]. Its pathway is protein modification; protein lipoylation via endogenous pathway; protein N(6)-(lipoyl)lysine from octanoyl-[acyl-carrier-protein]: step 2/2. Catalyzes the radical-mediated insertion of two sulfur atoms into the C-6 and C-8 positions of the octanoyl moiety bound to the lipoyl domains of lipoate-dependent enzymes, thereby converting the octanoylated domains into lipoylated derivatives. The polypeptide is Lipoyl synthase, mitochondrial (Aspergillus clavatus (strain ATCC 1007 / CBS 513.65 / DSM 816 / NCTC 3887 / NRRL 1 / QM 1276 / 107)).